Consider the following 405-residue polypeptide: Macrolide efflux protein A (405 aa).

11 helical membrane passes run 14–34 (IWAG…AIIF), 48–68 (MASL…GVLV), 76–98 (IMIG…AFYM), 145–165 (SLQS…YSVW), 168–188 (NAII…VAIV), 222–242 (FALL…NALF), 259–279 (ITEI…GLFG), 285–305 (ILLI…SGLL), 310–330 (FFIF…YSGV), 350–370 (LTGS…ALFA), and 373–393 (IGVN…AIVC).

This sequence belongs to the major facilitator superfamily. Drug:H(+) antiporter-3 (DHA3) (TC 2.A.1.21) family.

Its subcellular location is the cell membrane. Functionally, confers resistance to 14-membered macrolides including erythromycin and to 15-membered macrolides but not to 16-membered macrolides, lincosamides or analogs of streptogramin B. May function as an efflux pump to regulate intracellular macrolide levels. This chain is Macrolide efflux protein A, found in Streptococcus pyogenes serotype M6 (strain ATCC BAA-946 / MGAS10394).